Reading from the N-terminus, the 737-residue chain is Angiotensin-converting enzyme-like protein Ace3 (737 aa).

The N-terminal stretch at 1–23 (MNLPWALLLVLLSHRQLLPWLRT) is a signal peptide. Residues 24–639 (VGETSLNDFY…TDTEPEQAYL (616 aa)) lie on the Extracellular side of the membrane. The Peptidase M2 domain maps to 32-611 (FYSEAQAKLF…VKQGDTLGWP (580 aa)). A disulfide bond links Cys-146 and Cys-152. Residues Arg-180 and Tyr-218 each contribute to the chloride site. A disulfide bridge connects residues Cys-346 and Cys-364. 2 residues coordinate Zn(2+): His-377 and His-381. An N-linked (GlcNAc...) asparagine glycan is attached at Asn-390. Residue Glu-405 coordinates Zn(2+). Chloride contacts are provided by Trp-479, Arg-483, and Arg-516. A disulfide bridge links Cys-532 with Cys-544. The helical transmembrane segment at 640 to 660 (GQWVLLSMSFFMLVLILALGF) threads the bilayer. Residues 661–700 (RLHYLEKQLLDEDTMILKTLPYSYFLGIAMEPHQAARKQW) are Cytoplasmic-facing. Residues 701–721 (LLLGLCCILMLCCIGLLIRIV) traverse the membrane as a helical segment. The Extracellular segment spans residues 722-737 (TQNTENTPWMKNEGQS).

The protein belongs to the peptidase M2 family. In terms of assembly, interacts with IZUMO1. It depends on Zn(2+) as a cofactor. As to expression, expressed in sperm and testis (at protein level). Expressed in heart and testis. Not detected in kidney, lung, liver, brain, ovary, spleen and thymus.

The protein resides in the cytoplasmic vesicle. Its subcellular location is the secretory vesicle. It localises to the acrosome membrane. This Mus musculus (Mouse) protein is Angiotensin-converting enzyme-like protein Ace3.